We begin with the raw amino-acid sequence, 638 residues long: Threonine--tRNA ligase (638 aa).

The region spanning 1–61 (MPKITLPDGT…KNDSKVVIIT (61 aa)) is the TGS domain. A catalytic region spans residues 242 to 533 (DHRKLGKKHS…LIEQYEAKFP (292 aa)). The Zn(2+) site is built by C333, H384, and H510.

Belongs to the class-II aminoacyl-tRNA synthetase family. Homodimer. The cofactor is Zn(2+).

Its subcellular location is the cytoplasm. It carries out the reaction tRNA(Thr) + L-threonine + ATP = L-threonyl-tRNA(Thr) + AMP + diphosphate + H(+). Catalyzes the attachment of threonine to tRNA(Thr) in a two-step reaction: L-threonine is first activated by ATP to form Thr-AMP and then transferred to the acceptor end of tRNA(Thr). Also edits incorrectly charged L-seryl-tRNA(Thr). This is Threonine--tRNA ligase from Prochlorococcus marinus (strain MIT 9515).